The sequence spans 314 residues: Testis-specific Y-encoded protein 4 (314 aa).

This sequence belongs to the nucleosome assembly protein (NAP) family.

Its subcellular location is the cytoplasm. The protein localises to the nucleus. Its function is as follows. May be involved in sperm differentiation and proliferation. The polypeptide is Testis-specific Y-encoded protein 4 (TSPY4) (Homo sapiens (Human)).